The chain runs to 185 residues: Ribosome-recycling factor (185 aa).

A disordered region spans residues 138–185 (ALKKQEKDGEITEDEERRLEKEVQKVTDESTKKIDQMADNKRKEIIQG).

This sequence belongs to the RRF family.

Its subcellular location is the cytoplasm. Functionally, responsible for the release of ribosomes from messenger RNA at the termination of protein biosynthesis. May increase the efficiency of translation by recycling ribosomes from one round of translation to another. This is Ribosome-recycling factor from Lactobacillus delbrueckii subsp. bulgaricus (strain ATCC 11842 / DSM 20081 / BCRC 10696 / JCM 1002 / NBRC 13953 / NCIMB 11778 / NCTC 12712 / WDCM 00102 / Lb 14).